Reading from the N-terminus, the 1183-residue chain is PAN2-PAN3 deadenylation complex catalytic subunit PAN2 (1183 aa).

WD repeat units follow at residues 150 to 189 (SIENSSPVVKLAPLHRTVLAAGLSGQVTVLDPRTGFKAAQ) and 289 to 328 (DVSSYITSMALSSRGDYLAFGDGDGQLHVWTTNETGENAA). The tract at residues 331–478 (ENGSIVLPPF…EEIEEELNDG (148 aa)) is linker. Residues 439-470 (AEGRARGKGRRDSGPRFRSEKDKKGTYKDKEE) form a disordered region. Residues 448 to 469 (RRDSGPRFRSEKDKKGTYKDKE) show a composition bias toward basic and acidic residues. Residues 479–864 (EVPKYYRKVE…VPAVIILERE (386 aa)) form the USP domain. The Exonuclease domain occupies 916 to 1085 (VAIDAEFVAL…HDSIEDAHFA (170 aa)). Residues D919, E921, D1028, and D1081 each coordinate a divalent metal cation. Residues 1155–1183 (KSRMATPPPPTKLGLPQWASQNSPSPLRR) are disordered. Residues 1172 to 1183 (WASQNSPSPLRR) are compositionally biased toward polar residues.

This sequence belongs to the peptidase C19 family. PAN2 subfamily. As to quaternary structure, forms a heterotrimer with an asymmetric homodimer of the regulatory subunit PAN3 to form the poly(A)-nuclease (PAN) deadenylation complex. The cofactor is a divalent metal cation.

Its subcellular location is the cytoplasm. It catalyses the reaction Exonucleolytic cleavage of poly(A) to 5'-AMP.. Its activity is regulated as follows. Positively regulated by the regulatory subunit PAN3. In terms of biological role, catalytic subunit of the poly(A)-nuclease (PAN) deadenylation complex, one of two cytoplasmic mRNA deadenylases involved in mRNA turnover. PAN specifically shortens poly(A) tails of RNA and the activity is stimulated by poly(A)-binding protein PAB1. PAN deadenylation is followed by rapid degradation of the shortened mRNA tails by the CCR4-NOT complex. Deadenylated mRNAs are then degraded by two alternative mechanisms, namely exosome-mediated 3'-5' exonucleolytic degradation, or deadenylation-dependent mRNA decaping and subsequent 5'-3' exonucleolytic degradation by XRN1. May also be involved in post-transcriptional maturation of mRNA poly(A) tails. The polypeptide is PAN2-PAN3 deadenylation complex catalytic subunit PAN2 (Cryptococcus neoformans var. neoformans serotype D (strain B-3501A) (Filobasidiella neoformans)).